The sequence spans 402 residues: Phosphopentomutase (402 aa).

Mn(2+)-binding residues include aspartate 10, aspartate 301, histidine 306, aspartate 342, histidine 343, and histidine 354.

It belongs to the phosphopentomutase family. Mn(2+) is required as a cofactor.

It localises to the cytoplasm. The enzyme catalyses 2-deoxy-alpha-D-ribose 1-phosphate = 2-deoxy-D-ribose 5-phosphate. It catalyses the reaction alpha-D-ribose 1-phosphate = D-ribose 5-phosphate. Its pathway is carbohydrate degradation; 2-deoxy-D-ribose 1-phosphate degradation; D-glyceraldehyde 3-phosphate and acetaldehyde from 2-deoxy-alpha-D-ribose 1-phosphate: step 1/2. Isomerase that catalyzes the conversion of deoxy-ribose 1-phosphate (dRib-1-P) and ribose 1-phosphate (Rib-1-P) to deoxy-ribose 5-phosphate (dRib-5-P) and ribose 5-phosphate (Rib-5-P), respectively. This is Phosphopentomutase from Aeromonas hydrophila subsp. hydrophila (strain ATCC 7966 / DSM 30187 / BCRC 13018 / CCUG 14551 / JCM 1027 / KCTC 2358 / NCIMB 9240 / NCTC 8049).